A 600-amino-acid chain; its full sequence is MRLSQMLFVTLREDPAEAEIPSHKLLLRAGYIRRIASGIYAYLPLMWRVLRKVSQIVREEMDATGAQETLLPQLQPAELWQESGRWETYTKAEGIMFSLDDRQQRQLGLGPTHEEVITAVARDLIRSYRQLPQNLYQIQTKFRDEIRPRFGLMRGREFIMKDAYSFHADEESLRQTYAAMDQAYRNIFRRCGLQFRAVEADSGAIGGSASQEFMILADAGEDEILYTEDGRYAANVEKAVSLPAEAIASAFTTFEKRETPGTDTIASLCEFLKADPTQVVKQVLYQAVFDNGKLLPILISIRGDQSVNEIKLTNELTRRAADYGAKTVIALTVPDAEALKKWTAAPLPLGYLGPDLADSAIAVNESIIPKFLRLVDPTAAELQNFVTGANEVNFHVVGANWETNFPKPAVVDLRTALVGDRAQHDSSQVLASARGIEAGHIFQLGLKYSQAMGATFTTENGTEEPLWMGCYGIGVSRVAQAAVEQSYDKDGIIWPVAIAPYQAVVVIPNITDTEQVAAAEKIYADLTAAGIETLLDDRDERAGVKFKDADLIGIPYRIVTGRSLKEGKVEVVQRASKESSVIAVGSVVETVQDWIAAAIV.

This sequence belongs to the class-II aminoacyl-tRNA synthetase family. ProS type 1 subfamily. In terms of assembly, homodimer.

The protein localises to the cytoplasm. It carries out the reaction tRNA(Pro) + L-proline + ATP = L-prolyl-tRNA(Pro) + AMP + diphosphate. Catalyzes the attachment of proline to tRNA(Pro) in a two-step reaction: proline is first activated by ATP to form Pro-AMP and then transferred to the acceptor end of tRNA(Pro). As ProRS can inadvertently accommodate and process non-cognate amino acids such as alanine and cysteine, to avoid such errors it has two additional distinct editing activities against alanine. One activity is designated as 'pretransfer' editing and involves the tRNA(Pro)-independent hydrolysis of activated Ala-AMP. The other activity is designated 'posttransfer' editing and involves deacylation of mischarged Ala-tRNA(Pro). The misacylated Cys-tRNA(Pro) is not edited by ProRS. The polypeptide is Proline--tRNA ligase (Synechococcus elongatus (strain ATCC 33912 / PCC 7942 / FACHB-805) (Anacystis nidulans R2)).